The chain runs to 64 residues: Large ribosomal subunit protein bL32 (64 aa).

The tract at residues 1 to 35 (MAVQKSRVTPSRRGQRRSHDALTAKQLSTDPTSGE) is disordered.

This sequence belongs to the bacterial ribosomal protein bL32 family.

This is Large ribosomal subunit protein bL32 from Xanthomonas campestris pv. campestris (strain 8004).